Reading from the N-terminus, the 367-residue chain is Alanine racemase (367 aa).

The active-site Proton acceptor; specific for D-alanine is the K40. An N6-(pyridoxal phosphate)lysine modification is found at K40. A substrate-binding site is contributed by R136. The Proton acceptor; specific for L-alanine role is filled by Y263. Residue M310 coordinates substrate.

It belongs to the alanine racemase family. Pyridoxal 5'-phosphate serves as cofactor.

It carries out the reaction L-alanine = D-alanine. It functions in the pathway amino-acid biosynthesis; D-alanine biosynthesis; D-alanine from L-alanine: step 1/1. Its function is as follows. Catalyzes the interconversion of L-alanine and D-alanine. May also act on other amino acids. The chain is Alanine racemase (alr) from Lactococcus lactis subsp. cremoris (strain MG1363).